The following is a 352-amino-acid chain: tRNA-specific 2-thiouridylase MnmA (352 aa).

ATP is bound by residues 7–14 (GLSGGVDS) and leucine 33. Residue cysteine 94 is the Nucleophile of the active site. Cysteine 94 and cysteine 193 are disulfide-bonded. Glycine 119 serves as a coordination point for ATP. Residues 143–145 (KDQ) form an interaction with tRNA region. The Cysteine persulfide intermediate role is filled by cysteine 193. Residues 298 to 299 (RY) form an interaction with tRNA region.

It belongs to the MnmA/TRMU family.

It localises to the cytoplasm. It carries out the reaction S-sulfanyl-L-cysteinyl-[protein] + uridine(34) in tRNA + AH2 + ATP = 2-thiouridine(34) in tRNA + L-cysteinyl-[protein] + A + AMP + diphosphate + H(+). Functionally, catalyzes the 2-thiolation of uridine at the wobble position (U34) of tRNA, leading to the formation of s(2)U34. This is tRNA-specific 2-thiouridylase MnmA from Microcystis aeruginosa (strain NIES-843 / IAM M-2473).